A 436-amino-acid chain; its full sequence is Protein disulfide-isomerase (436 aa).

Residues 216–365 form the Thioredoxin domain; that stretch reads FLAGKIDPSI…VEDATESAKA (150 aa). Catalysis depends on nucleophile residues Cys266 and Cys269. Cys266 and Cys269 are oxidised to a cystine. The disordered stretch occupies residues 328-436; it reads TLVPHCRGSR…ASASSVKDEL (109 aa). A compositionally biased stretch (basic residues) spans 334 to 343; it reads RGSRPVHRRE. 2 stretches are compositionally biased toward low complexity: residues 362–377 and 385–436; these read SAKA…AASA and VKSG…KDEL. The short motif at 433–436 is the Prevents secretion from ER element; it reads KDEL.

Belongs to the protein disulfide isomerase family.

The protein resides in the endoplasmic reticulum lumen. The catalysed reaction is Catalyzes the rearrangement of -S-S- bonds in proteins.. In terms of biological role, participates in the folding of proteins containing disulfide bonds, may be involved in glycosylation, prolyl hydroxylation and triglyceride transfer. This Alternaria alternata (Alternaria rot fungus) protein is Protein disulfide-isomerase.